Consider the following 215-residue polypeptide: MHDELVWIDCEMTGLDLGSDQLIEIAALVTDADLNILGDGVDVVIHIDSTALSSMIDVVAEMHSRSGLINEVESSIVDLVTAESIVLDYINNHVKQPKTAPLAGNSIATDRSFIARDMPTLDSFLHYRMIDVSSIKELCRRWYPRIYFGQPAKGLTHRALADIHESIRELRFYRRTAFVPPPGPSTREIAEVVADLSGTPATPGDIDSAYERPNG.

In terms of domain architecture, Exonuclease spans 5 to 170; it reads LVWIDCEMTG…ADIHESIREL (166 aa). The active site involves tyrosine 127.

Belongs to the oligoribonuclease family.

The protein resides in the cytoplasm. Functionally, 3'-to-5' exoribonuclease specific for small oligoribonucleotides. In Mycobacterium leprae (strain TN), this protein is Oligoribonuclease.